The chain runs to 187 residues: UPF0301 protein Pcryo_0062 (187 aa).

Belongs to the UPF0301 (AlgH) family.

The sequence is that of UPF0301 protein Pcryo_0062 from Psychrobacter cryohalolentis (strain ATCC BAA-1226 / DSM 17306 / VKM B-2378 / K5).